Consider the following 293-residue polypeptide: MIILLFFVDQIHQRDLNEIYQRVAAKLQQEDSLSHQKQRSDQFEKLKRGKTVLEGMLRFLSLSKSNIKPDLKDSMDYRKNNIMNFLNMQSLRKTVQKLQLTKSEIQPMQQPLSQTVQDQSHDDQTTLQMQSMSMQGAGSRVQQIRQGVLQSLEIGTPGISASPLLPELTSPDGNIINPLTSTCGKSSATELPIERLIRAMKSISPQALSSAVCDIRSVVSMVDRIAGSVPGKGSRASFGVDLVAMTKCHLQERNFMTQDGDHEKEASDNPNAIKCCFIGRKALVIATSILLVW.

It belongs to the plant Mediator complex subunit 15 family. Component of the Mediator complex.

It localises to the nucleus. Functionally, component of the Mediator complex, a coactivator involved in the regulated transcription of nearly all RNA polymerase II-dependent genes. Mediator functions as a bridge to convey information from gene-specific regulatory proteins to the basal RNA polymerase II transcription machinery. The Mediator complex, having a compact conformation in its free form, is recruited to promoters by direct interactions with regulatory proteins and serves for the assembly of a functional preinitiation complex with RNA polymerase II and the general transcription factors. The protein is Probable mediator of RNA polymerase II transcription subunit 15b (MED15B) of Arabidopsis thaliana (Mouse-ear cress).